We begin with the raw amino-acid sequence, 168 residues long: MSMLCYTLIIAFLIGIWAAPKSEDNVSLGSPATPDISDTSCAKTHEALKTSQNTDQHSPAPKKAEDQEFGSAANIIVDPKLFQKRRFQSPRVLFSTQPPPLSRDEQSVEFLDNADSLNRNIRAKRGIHPVHNQGEFSVCDSVNVWVANKTTATDIKGNEVTVMVNVKP.

The signal sequence occupies residues 1–18 (MSMLCYTLIIAFLIGIWA). A propeptide spanning residues 19-123 (APKSEDNVSL…ADSLNRNIRA (105 aa)) is cleaved from the precursor. A glycan (N-linked (GlcNAc...) asparagine) is linked at asparagine 25. A disordered region spans residues 48 to 70 (LKTSQNTDQHSPAPKKAEDQEFG). An N-linked (GlcNAc...) asparagine glycan is attached at asparagine 148.

The protein belongs to the NGF-beta family. Homodimer; non-covalently linked. Expressed by the venom gland.

Its subcellular location is the secreted. Its function is as follows. Nerve growth factor is important for the development and maintenance of the sympathetic and sensory nervous systems. It stimulates division and differentiation of sympathetic and embryonic sensory neurons as well as basal forebrain cholinergic neurons in the brain. Its relevance in the snake venom is not clear. However, it has been shown to inhibit metalloproteinase-dependent proteolysis of platelet glycoprotein Ib alpha, suggesting a metalloproteinase inhibition to prevent metalloprotease autodigestion and/or protection against prey proteases. This chain is Venom nerve growth factor, found in Echis ocellatus (Ocellated saw-scaled viper).